Here is a 903-residue protein sequence, read N- to C-terminus: Translation initiation factor IF-2 (903 aa).

A disordered region spans residues 49–314; it reads LNREHGSGPD…GSSLQQGFNK (266 aa). The segment covering 68-82 has biased composition (polar residues); sequence STLNIQGTGGKSKSV. 2 stretches are compositionally biased toward basic and acidic residues: residues 93-163 and 174-225; these read VKRD…EAAE and EVSK…ENAT. Over residues 265–279 the composition is skewed to basic residues; that stretch reads GRARPAKVARQKKSN. Residues 280–293 show a composition bias toward basic and acidic residues; the sequence is KHSESKADREEARA. A tr-type G domain is found at 402–571; it reads PRAPVVTIMG…LLQSEVLELK (170 aa). Positions 411 to 418 are G1; sequence GHVDHGKT. 411–418 serves as a coordination point for GTP; it reads GHVDHGKT. A G2 region spans residues 436–440; the sequence is GITQH. The interval 457–460 is G3; sequence DTPG. Residues 457–461 and 511–514 contribute to the GTP site; these read DTPGH and NKID. Positions 511–514 are G4; sequence NKID. Residues 547–549 form a G5 region; sequence SAK.

Belongs to the TRAFAC class translation factor GTPase superfamily. Classic translation factor GTPase family. IF-2 subfamily.

The protein localises to the cytoplasm. One of the essential components for the initiation of protein synthesis. Protects formylmethionyl-tRNA from spontaneous hydrolysis and promotes its binding to the 30S ribosomal subunits. Also involved in the hydrolysis of GTP during the formation of the 70S ribosomal complex. This chain is Translation initiation factor IF-2, found in Cronobacter sakazakii (strain ATCC BAA-894) (Enterobacter sakazakii).